Consider the following 169-residue polypeptide: Putative tRNA (cytidine(34)-2'-O)-methyltransferase (169 aa).

S-adenosyl-L-methionine is bound by residues Ile-79, Gly-104, Ile-125, and Ser-133.

The protein belongs to the class IV-like SAM-binding methyltransferase superfamily. RNA methyltransferase TrmH family. TrmL subfamily.

It localises to the cytoplasm. It carries out the reaction cytidine(34) in tRNA + S-adenosyl-L-methionine = 2'-O-methylcytidine(34) in tRNA + S-adenosyl-L-homocysteine + H(+). The enzyme catalyses 5-carboxymethylaminomethyluridine(34) in tRNA(Leu) + S-adenosyl-L-methionine = 5-carboxymethylaminomethyl-2'-O-methyluridine(34) in tRNA(Leu) + S-adenosyl-L-homocysteine + H(+). Functionally, could methylate the ribose at the nucleotide 34 wobble position in tRNA. In Listeria monocytogenes serotype 4b (strain F2365), this protein is Putative tRNA (cytidine(34)-2'-O)-methyltransferase.